Consider the following 332-residue polypeptide: Alpha-N-acetylgalactosaminide alpha-2,6-sialyltransferase 6 (332 aa).

The tract at residues 1–26 (MACPRPLSQCDHTPLPGPPAGHWPLP) is disordered. At 1-42 (MACPRPLSQCDHTPLPGPPAGHWPLPLSRRRREMKSNKEQRS) the chain is on the cytoplasmic side. Residues 43–63 (AVFVILFALITILILYSSSSA) form a helical; Signal-anchor for type II membrane protein membrane-spanning segment. The Lumenal segment spans residues 64–332 (NEVFHYGSLR…GITFSHPSWT (269 aa)). N-linked (GlcNAc...) asparagine glycosylation occurs at Asn97. Cysteines 107 and 255 form a disulfide.

This sequence belongs to the glycosyltransferase 29 family.

It is found in the golgi apparatus membrane. It carries out the reaction a ganglioside GM1b (d18:1(4E)) + CMP-N-acetyl-beta-neuraminate = a ganglioside GD1alpha (d18:1(4E)) + CMP + H(+). The catalysed reaction is N-acetyl-alpha-neuraminosyl-(2-&gt;3)-beta-D-galactosyl-(1-&gt;3)-N-acetyl-beta-D-glucosaminyl-(1-&gt;3)-beta-D-galactosyl-(1-&gt;4)-beta-D-glucosyl-(1&lt;-&gt;1')-N-acyl-sphing-4-enine + CMP-N-acetyl-beta-neuraminate = N-acetyl-alpha-neuraminosyl-(2-&gt;3)-beta-D-galactosyl-(1-&gt;3)-[N-acetyl-alpha-neuraminosyl-(2-&gt;6)]-N-acetyl-beta-D-glucosaminyl-(1-&gt;3)-beta-D-galactosyl-(1-&gt;4)-beta-D-glucosyl-(1&lt;-&gt;1')-N-acyl-sphing-4-enine + CMP + H(+). It catalyses the reaction a globoside MSGG + CMP-N-acetyl-beta-neuraminate = a globoside DSGG + CMP + H(+). The enzyme catalyses a ganglioside GD1a (d18:1(4E)) + CMP-N-acetyl-beta-neuraminate = a ganglioside GT1aalpha (d18:1(4E)) + CMP + H(+). It carries out the reaction a ganglioside GT1b (d18:1(4E)) + CMP-N-acetyl-beta-neuraminate = a ganglioside GQ1balpha (d18:1(4E)) + CMP + H(+). The catalysed reaction is 3-O-[alpha-Neu5Ac-(2-&gt;3)-beta-D-Gal-(1-&gt;3)-alpha-D-GalNAc]-L-Ser-[protein] + CMP-N-acetyl-beta-neuraminate = a 3-O-{alpha-Neu5Ac-(2-&gt;3)-beta-D-Gal-(1-&gt;3)-[alpha-Neu5Ac-(2-&gt;6)]-alpha-D-GalNAc}-L-seryl-[protein] + CMP + H(+). It catalyses the reaction 3-O-[alpha-Neu5Ac-(2-&gt;3)-beta-D-Gal-(1-&gt;3)-alpha-D-GalNAc]-L-Thr-[protein] + CMP-N-acetyl-beta-neuraminate = a 3-O-{alpha-Neu5Ac-(2-&gt;3)-beta-D-Gal-(1-&gt;3)-[alpha-Neu5Ac-(2-&gt;6)]-alpha-D-GalNAc}-L-threonyl-[protein] + CMP + H(+). Functionally, transfers the sialyl group (N-acetyl-alpha-neuraminyl or NeuAc) from CMP-NeuAc onto glycoproteins and glycolipids, forming an alpha-2,6-linkage. Produces branched type disialyl structures by transfer of a sialyl group onto the GalNAc or GlcNAc residue inside backbone core chains having a terminal sialic acid with an alpha-2,3-linkage on Gal. ST6GalNAcVI prefers glycolipids to glycoproteins, predominantly catalyzing the biosynthesis of ganglioside GD1alpha from GM1b. Besides GMb1, MSGG and other glycolipids, it shows activity towards sialyl Lc4Cer generating disialyl Lc4Cer, which can lead to the synthesis of disialyl Lewis a (Le(a)), suggested to be a cancer-associated antigen. Also has activity toward GD1a and GT1b, and can generate DSGG (disialylgalactosylgloboside) from MSGG (monosialylgalactosylgloboside). The polypeptide is Alpha-N-acetylgalactosaminide alpha-2,6-sialyltransferase 6 (ST6GALNAC6) (Bos taurus (Bovine)).